Here is a 426-residue protein sequence, read N- to C-terminus: MLDRDLTLSDDAYESSPVSRHKTHTVKVGQVKIGGNNPIVVQSMALGAHIDSDNIKSSAQKYAKEVIELAHAGSELVRIALNSEEVAKAIPYIVEEINKEGFDGKILVGCGQYELYRLIQDYPDNIKILGKIRINPGNIGFGDKRDEKFEKIIEYAITHDLPVRIGVNWGSLDKYLSQKLMDENSLSSNPKTSDVILRKTLVMSALGSAKKAEKIGLNAEKIIISCKVSRVQDLILVYTALAKSSNYALHLGLTEAGMGNKGVVNTTAGLTYLLQNGIGDTIRASLTQRPGESRTNEVVVCQEILQSIGLCYFNPQVSSCPGCGRTSSDRFRILTEEVNGYIKTHMPVWKKKNPGVEYMKVAVMGCIVNGPGESKHANLGISLPGYGEKPVSAVYKDGKYFKTLQGDNIFEEFKEIISDYVEKHYT.

Residues 1–20 (MLDRDLTLSDDAYESSPVSR) form a disordered region. The [4Fe-4S] cluster site is built by cysteine 320, cysteine 323, cysteine 366, and glutamate 373.

This sequence belongs to the IspG family. The cofactor is [4Fe-4S] cluster.

It carries out the reaction (2E)-4-hydroxy-3-methylbut-2-enyl diphosphate + oxidized [flavodoxin] + H2O + 2 H(+) = 2-C-methyl-D-erythritol 2,4-cyclic diphosphate + reduced [flavodoxin]. The protein operates within isoprenoid biosynthesis; isopentenyl diphosphate biosynthesis via DXP pathway; isopentenyl diphosphate from 1-deoxy-D-xylulose 5-phosphate: step 5/6. Functionally, converts 2C-methyl-D-erythritol 2,4-cyclodiphosphate (ME-2,4cPP) into 1-hydroxy-2-methyl-2-(E)-butenyl 4-diphosphate. This Wolbachia pipientis subsp. Culex pipiens (strain wPip) protein is 4-hydroxy-3-methylbut-2-en-1-yl diphosphate synthase (flavodoxin).